Here is a 37-residue protein sequence, read N- to C-terminus: Cytochrome b6-f complex subunit 5 (37 aa).

Residues 5–25 (LLSGIVLGMIPITLAGLFVTA) form a helical membrane-spanning segment.

Belongs to the PetG family. As to quaternary structure, the 4 large subunits of the cytochrome b6-f complex are cytochrome b6, subunit IV (17 kDa polypeptide, PetD), cytochrome f and the Rieske protein, while the 4 small subunits are PetG, PetL, PetM and PetN. The complex functions as a dimer.

The protein localises to the plastid. It localises to the chloroplast thylakoid membrane. In terms of biological role, component of the cytochrome b6-f complex, which mediates electron transfer between photosystem II (PSII) and photosystem I (PSI), cyclic electron flow around PSI, and state transitions. PetG is required for either the stability or assembly of the cytochrome b6-f complex. In Mesostigma viride (Green alga), this protein is Cytochrome b6-f complex subunit 5.